The following is a 209-amino-acid chain: Large ribosomal subunit protein uL3 (209 aa).

A disordered region spans residues 118–150 (GFQGAIKRHGQSRGPMTHGSRYHRRPGSMGPVD).

Belongs to the universal ribosomal protein uL3 family. Part of the 50S ribosomal subunit. Forms a cluster with proteins L14 and L19.

In terms of biological role, one of the primary rRNA binding proteins, it binds directly near the 3'-end of the 23S rRNA, where it nucleates assembly of the 50S subunit. This chain is Large ribosomal subunit protein uL3, found in Bacillus pumilus (strain SAFR-032).